Reading from the N-terminus, the 199-residue chain is Inner membrane-spanning protein YciB (199 aa).

The next 6 helical transmembrane spans lie at 4–24 (FIDFIPLILFFIVYKLEPRIV), 36–56 (IFSATAVLILASLLVYGTLFL), 64–84 (GQWITLLACLVFGGMTLTFQS), 90–110 (WKAPVVNWLFALGFAASHFIG), 135–155 (LAWVAFFVFSGCANLFVAFTF), and 162–182 (FKVFGSLGMTVLFLVGQGVFL).

Belongs to the YciB family.

It is found in the cell inner membrane. Functionally, plays a role in cell envelope biogenesis, maintenance of cell envelope integrity and membrane homeostasis. This chain is Inner membrane-spanning protein YciB, found in Azotobacter vinelandii (strain DJ / ATCC BAA-1303).